The following is a 188-amino-acid chain: Murein DD-endopeptidase MepS/Murein LD-carboxypeptidase (188 aa).

Residues 1–26 (MVKSQPILRYILRGIPAIAVAVLLSA) form the signal peptide. Cys-27 is lipidated: N-palmitoyl cysteine. The S-diacylglycerol cysteine moiety is linked to residue Cys-27. Residues 64-185 (VDVKSRIMDQ…KRYNEARRVL (122 aa)) enclose the NlpC/P60 domain. Cys-94 (nucleophile) is an active-site residue. His-145 serves as the catalytic Proton acceptor. His-157 is an active-site residue.

This sequence belongs to the peptidase C40 family. As to quaternary structure, monomer.

It localises to the cell outer membrane. The catalysed reaction is N-acetyl-D-glucosaminyl-N-acetylmuramoyl-L-alanyl-meso-2,6-diaminoheptanedioyl-D-alanine + H2O = N-acetyl-D-glucosaminyl-N-acetylmuramoyl-L-alanyl-meso-2,6-diaminoheptanedioate + D-alanine. It functions in the pathway cell wall biogenesis; cell wall polysaccharide biosynthesis. Functionally, a murein DD-endopeptidase with specificity for D-Ala-meso-diaminopimelic acid (mDAP) cross-links. Its role is probably to cleave D-Ala-mDAP cross-links to allow insertion of new glycans and thus cell wall expansion. Functionally redundant with MepM and MepH. Also has weak LD-carboxypeptidase activity on L-mDAP-D-Ala peptide bonds. This chain is Murein DD-endopeptidase MepS/Murein LD-carboxypeptidase (mepS), found in Escherichia coli O157:H7.